The chain runs to 272 residues: Arylesterase (272 aa).

Residues 21–253 (KPVLFSHGWL…LKVYKDAPHG (233 aa)) form the AB hydrolase-1 domain. Acetate is bound at residue tryptophan 29. Serine 95 is a catalytic residue. Position 96 (methionine 96) interacts with acetate. Catalysis depends on residues aspartate 223 and histidine 252.

It belongs to the AB hydrolase superfamily. Bacterial non-heme haloperoxidase / perhydrolase family. Dimer of trimers.

The enzyme catalyses a phenyl acetate + H2O = a phenol + acetate + H(+). It carries out the reaction peracetic acid + H2O = acetate + H2O2 + H(+). The catalysed reaction is a percarboxylic acid + H2O = a carboxylate + H2O2 + H(+). Its function is as follows. Hydrolyzes phenolic esters, such as phenyl acetate, nitrophenyl acetate and naphtyl acetate. Can act on a wide range of esters, but reaction rate and enantioselectivity differ significantly depending on the substrate. Shows a preference for esters with small acyl groups. Also shows low perhydrolase activity, and catalyzes the reversible formation of peroxycarboxylic acids from carboxylic acids and hydrogen peroxide. In vitro, enzyme-generated peracetic acid oxidizes bromide ion to bromonium, which reacts with monochlorodimedone to form bromochlorodimedone. This Pseudomonas fluorescens protein is Arylesterase.